The following is a 255-amino-acid chain: F-box/SPRY domain-containing protein 1 (255 aa).

The F-box domain occupies 3 to 51 (DPVAALCNYNVLEVIFSYLELEDLNHCSQVCKSWYHFLNDENSDVWRWH). In terms of domain architecture, B30.2/SPRY spans 61–253 (LKSDLLASVS…VSMVYLGTPL (193 aa)).

Belongs to the FBXO45/Fsn family. Component of an E3 ubiquitin ligase complex composed of hiw and Fsn.

The protein localises to the synapse. The protein operates within protein modification; protein ubiquitination. Required in the presynaptic motoneuron to down-regulate the levels of wnd and restrain synaptic terminal growth at the neuromuscular junction (NMJ). The sequence is that of F-box/SPRY domain-containing protein 1 from Drosophila yakuba (Fruit fly).